The primary structure comprises 479 residues: Calcium uniporter protein, mitochondrial (479 aa).

The N-terminal 54 residues, 1–54, are a transit peptide targeting the mitochondrion; it reads MNHALRRATLGLSPGLRASRLQQSFAKHQIPAVYRCEAASTPLQRAFTTSRCFR. Over 55-323 the chain is Mitochondrial matrix; the sequence is QETAAESEKD…DTLAHQGAHR (269 aa). 2 disordered regions span residues 56–125 and 206–238; these read ETAA…KGRL and EADQNEQDGRKDDNKKKDNANVASYSGLGHEGP. A coiled-coil region spans residues 59–79; sequence AESEKDDAARREEQSERARKR. Residues 60–75 are compositionally biased toward basic and acidic residues; the sequence is ESEKDDAARREEQSER. Over residues 83 to 93 the composition is skewed to polar residues; sequence NVTSGSSAQTL. Basic and acidic residues-rich tracts occupy residues 94–122 and 206–224; these read ENDRPWHRADSGADPDAPKDVPENKDMKK and EADQNEQDGRKDDNKKKDN. The helical transmembrane segment at 324–344 threads the bilayer; the sequence is LAQGGFAALAGWWGVVYYVTF. Over 345–354 the chain is Mitochondrial intermembrane; sequence HTQAGWDLVE. The Selectivity filter signature appears at 350-358; sequence WDLVEPVTY. E354 contributes to the Ca(2+) binding site. The helical transmembrane segment at 355–375 threads the bilayer; that stretch reads PVTYLAGLTTVMGAYLWFLYI. At 376 to 479 the chain is on the mitochondrial matrix side; the sequence is SRDLSYKAAM…GSSDKIKKKQ (104 aa). Over residues 445–462 the composition is skewed to basic and acidic residues; it reads KVLEEEKQGRDGTKVTEG. A disordered region spans residues 445–479; it reads KVLEEEKQGRDGTKVTEGKDEDDGPGSSDKIKKKQ.

This sequence belongs to the MCU (TC 1.A.77) family. Homotetramer, assembles in a dimer or dimers configuration with two interfaces.

The protein localises to the mitochondrion inner membrane. The catalysed reaction is Ca(2+)(in) = Ca(2+)(out). Its function is as follows. Highly selective calcium channel localized to the inner mitochondrial membrane, which mediates calcium uptake into the mitochondrial matrix. Mitochondrial calcium homeostasis plays key roles in cellular physiology and regulates ATP production, cytoplasmic calcium signals and activation of cell death pathways. Sufficient to operate as a pore-forming channel without the need of calcium-sensor or auxiliary subunit. In Gibberella zeae (strain ATCC MYA-4620 / CBS 123657 / FGSC 9075 / NRRL 31084 / PH-1) (Wheat head blight fungus), this protein is Calcium uniporter protein, mitochondrial.